A 678-amino-acid chain; its full sequence is MNFSVLPPEINSALMFAGAGPGPMLAAASAWTGLAGDLGSAAASFSAVTSQLATGSWQGPASAAMTGVAASYARWLTTAAAQAEQAAGQAQAAVSAFEAALAATVHPGAVSANRGRLRSLVASNLLGQNAPAIAAVEAVYEQMWAADVAAMLGYHGEASAVALSLTPFTPSPSAAATPGGAVIIAGFPFLDLGNVTIGGFNLASGNLGLGNLGSFNPGSANTGSVNLGNANIGDLNLGSGNIGSYNLGGGNTGDLNPGSGNTGTLNWGSGNIGSYNLGGGNLGSYNLGSGNTGDTNFGGGNTGNLNVGGGNTGNSNFGFGNTGNVNFGNGNTGDTNFGSGNLGSGNIGFGNKGSHNIGFGNSGNNNIGFGLTGDNQIGFGALNSGSGNLGFGNSGNGNIGFFNSGNNNIGMGNSGNGVGALSVEFGSSAERSSGFGNSGELSTGIGNSGQLSTGWFNSATTSTGWFNSGTTNTGWFNSGTTNTGIGNSGGNLVTGSMGLFNSGHTNTGSFNAGSMNTGDFNSGNVNTGYFNSGNINTGFFNSGDLNTGLFNSVNQPVQNSGWLHTGTNNSGYANAGTFNSGFDNNARDEHAEFVTGNSGLANVGNYNAGIINVGDHLSGFRNSVPTITGTANISGFVNAGTSISGFFNFGSLMSGFANFDDEVSGYLNGDSRASGWIH.

2 helical membrane-spanning segments follow: residues 14 to 34 and 180 to 200; these read LMFAGAGPGPMLAAASAWTGL and GAVIIAGFPFLDLGNVTIGGF.

The protein belongs to the mycobacterial PPE family.

The protein resides in the cell membrane. This is an uncharacterized protein from Mycobacterium tuberculosis (strain CDC 1551 / Oshkosh).